The sequence spans 66 residues: Large ribosomal subunit protein uL30 (66 aa).

It belongs to the universal ribosomal protein uL30 family. As to quaternary structure, part of the 50S ribosomal subunit.

This Chloroherpeton thalassium (strain ATCC 35110 / GB-78) protein is Large ribosomal subunit protein uL30.